The sequence spans 87 residues: MKNFETLFAELSEKAATRPAGSRTVAELESGVHGIGKKVVEEAAEVWMAAEYESDEAAAEEISQLLYHLQVLMLAKGLTLEDVYKHL.

It belongs to the PRA-PH family.

It is found in the cytoplasm. It catalyses the reaction 1-(5-phospho-beta-D-ribosyl)-ATP + H2O = 1-(5-phospho-beta-D-ribosyl)-5'-AMP + diphosphate + H(+). It participates in amino-acid biosynthesis; L-histidine biosynthesis; L-histidine from 5-phospho-alpha-D-ribose 1-diphosphate: step 2/9. In Arthrobacter sp. (strain FB24), this protein is Phosphoribosyl-ATP pyrophosphatase.